We begin with the raw amino-acid sequence, 250 residues long: MNPVVKVDNLSVFYEQHQAIKNIRFQAGPGQMIGILGPNGAGKSTLMKAILGLERYTGTVKVLDKHVRHVRKQIAYVPQRNAIDWDFPVLVEDVVMMGRFAHIPWFKRAGKNDKRLVEESLKKVGMEEYRSRQIGELSGGQQQRVFIARALAQESELFFLDEPFVGIDVTSESIILSLLQELRDRGKTIFVVHHDLSKVEKYFDQVLMLNKELIAYGPVADVYTPEMVAKTYQGNLATFSKKDEVMVVNV.

The ABC transporter domain maps to 5-236 (VKVDNLSVFY…MVAKTYQGNL (232 aa)). Residue 37 to 44 (GPNGAGKS) participates in ATP binding.

This sequence belongs to the ABC transporter superfamily.

It localises to the cell membrane. Its function is as follows. This protein is probably a component of a manganese permease, a binding protein-dependent, ATP-driven transport system. Probably responsible for energy coupling to the transport system. The sequence is that of Manganese transport system ATP-binding protein MntB (mntB) from Halalkalibacterium halodurans (strain ATCC BAA-125 / DSM 18197 / FERM 7344 / JCM 9153 / C-125) (Bacillus halodurans).